We begin with the raw amino-acid sequence, 95 residues long: Turripeptide OL184 (95 aa).

Contains 5 disulfide bonds. Expressed by the venom duct.

The protein localises to the secreted. Its function is as follows. Acts as a neurotoxin by inhibiting an ion channel. The protein is Turripeptide OL184 of Iotyrris olangoensis (Sea snail).